The chain runs to 88 residues: Small ribosomal subunit protein bS16 (88 aa).

The protein belongs to the bacterial ribosomal protein bS16 family.

The chain is Small ribosomal subunit protein bS16 from Geobacter metallireducens (strain ATCC 53774 / DSM 7210 / GS-15).